A 142-amino-acid polypeptide reads, in one-letter code: Large ribosomal subunit protein uL11 (142 aa).

The protein belongs to the universal ribosomal protein uL11 family. As to quaternary structure, part of the ribosomal stalk of the 50S ribosomal subunit. Interacts with L10 and the large rRNA to form the base of the stalk. L10 forms an elongated spine to which L12 dimers bind in a sequential fashion forming a multimeric L10(L12)X complex. One or more lysine residues are methylated.

Forms part of the ribosomal stalk which helps the ribosome interact with GTP-bound translation factors. This is Large ribosomal subunit protein uL11 from Leptospira borgpetersenii serovar Hardjo-bovis (strain JB197).